The sequence spans 363 residues: Probable dual-specificity RNA methyltransferase RlmN (363 aa).

E106 functions as the Proton acceptor in the catalytic mechanism. The 234-residue stretch at 112-345 (HEYGNSVCVT…VTIRREQGHD (234 aa)) folds into the Radical SAM core domain. C119 and C350 are disulfide-bonded. Residues C126, C130, and C133 each contribute to the [4Fe-4S] cluster site. S-adenosyl-L-methionine is bound by residues 176-177 (GE), S208, 231-233 (SLH), and N307. The active-site S-methylcysteine intermediate is C350.

This sequence belongs to the radical SAM superfamily. RlmN family. The cofactor is [4Fe-4S] cluster.

It localises to the cytoplasm. It carries out the reaction adenosine(2503) in 23S rRNA + 2 reduced [2Fe-2S]-[ferredoxin] + 2 S-adenosyl-L-methionine = 2-methyladenosine(2503) in 23S rRNA + 5'-deoxyadenosine + L-methionine + 2 oxidized [2Fe-2S]-[ferredoxin] + S-adenosyl-L-homocysteine. The enzyme catalyses adenosine(37) in tRNA + 2 reduced [2Fe-2S]-[ferredoxin] + 2 S-adenosyl-L-methionine = 2-methyladenosine(37) in tRNA + 5'-deoxyadenosine + L-methionine + 2 oxidized [2Fe-2S]-[ferredoxin] + S-adenosyl-L-homocysteine. Specifically methylates position 2 of adenine 2503 in 23S rRNA and position 2 of adenine 37 in tRNAs. This chain is Probable dual-specificity RNA methyltransferase RlmN, found in Bacillus velezensis (strain DSM 23117 / BGSC 10A6 / LMG 26770 / FZB42) (Bacillus amyloliquefaciens subsp. plantarum).